Here is a 198-residue protein sequence, read N- to C-terminus: Photosystem I assembly protein Ycf4 (198 aa).

Residues 1–20 are disordered; the sequence is MTASTTINKGDSPNGDSSAS. 2 helical membrane-spanning segments follow: residues 38 to 58 and 78 to 98; these read WASI…SSYL and LVMG…WLAI.

It belongs to the Ycf4 family.

It is found in the cellular thylakoid membrane. Seems to be required for the assembly of the photosystem I complex. This is Photosystem I assembly protein Ycf4 from Trichormus variabilis (strain ATCC 29413 / PCC 7937) (Anabaena variabilis).